A 219-amino-acid chain; its full sequence is uncharacterized protein (219 aa).

A helical transmembrane segment spans residues 13–32; sequence VFGLFLFSLIFFGLLSLATF.

Its subcellular location is the membrane. This is an uncharacterized protein from Aquifex aeolicus (strain VF5).